The sequence spans 252 residues: Cysteine-rich repeat secretory protein 38 (252 aa).

The signal sequence occupies residues M1 to S27. Gnk2-homologous domains are found at residues F34–F136 and F142–F248.

The protein belongs to the cysteine-rich repeat secretory protein family.

The protein localises to the secreted. The sequence is that of Cysteine-rich repeat secretory protein 38 (CRRSP38) from Arabidopsis thaliana (Mouse-ear cress).